Here is a 727-residue protein sequence, read N- to C-terminus: Tubulin polyglutamylase TTLL11 (727 aa).

A compositionally biased stretch (basic and acidic residues) spans 1–12; sequence MRRSSPEKKPEA. A disordered region spans residues 1–88; it reads MRRSSPEKKP…ARVVRRLPPA (88 aa). The span at 17-34 shows a compositional bias: low complexity; the sequence is DAAAAAAATAAATESLPA. Composition is skewed to basic and acidic residues over residues 49–63 and 72–81; these read DPERLELEEQPKDVG and HAPEEGEARV. The TTL domain maps to 125–477; it reads PVTVDSSKAR…EVKVAVIRDT (353 aa). ATP-binding positions include lysine 246, 252 to 253, 279 to 282, and 292 to 294; these read QG, QEYI, and KFD. Glutamine 252 contributes to the a protein binding site. Position 318 (arginine 318) interacts with L-glutamate. 340 to 341 contributes to the ATP binding site; the sequence is TN. Tyrosine 342, serine 343, and lysine 362 together coordinate L-glutamate. 3 residues coordinate Mg(2+): aspartate 425, glutamate 438, and asparagine 440. Positions 464–566 are c-MTBD region; sequence LVDEEVKVAV…SICLKQVFPK (103 aa). Position 470 (lysine 470) interacts with L-glutamate. 2 disordered regions span residues 530 to 551 and 694 to 727; these read KSFTSKEDLNCDPTGGDSEPNP and RPLQRNPPQMNRPEHSATGSSAPRVIGASKLSQS.

Belongs to the tubulin--tyrosine ligase family. Mg(2+) is required as a cofactor. Highly expressed in brain, kidney, liver, lung, muscle and testis. Expressed in heart, spleen and trachea. In the brain, expressed in ependymal cilia, cortex, corpus callosum and striatum.

It localises to the cytoplasm. It is found in the cytoskeleton. The protein localises to the cilium basal body. The enzyme catalyses L-glutamyl-[protein] + L-glutamate + ATP = gamma-L-glutamyl-L-glutamyl-[protein] + ADP + phosphate + H(+). It catalyses the reaction (L-glutamyl)(n)-gamma-L-glutamyl-L-glutamyl-[protein] + L-glutamate + ATP = (L-glutamyl)(n+1)-gamma-L-glutamyl-L-glutamyl-[protein] + ADP + phosphate + H(+). In terms of biological role, polyglutamylase which modifies tubulin, generating polyglutamate side chains of variable lengths on the gamma-carboxyl group of specific glutamate residues within the C-terminal tail of tubulin. Preferentially mediates ATP-dependent polyglutamate long side-chain elongation over the initiation step of the polyglutamylation reaction. Preferentially modifies the alpha-tubulin tail over a beta-tail. Required for CCSAP localization to both spindle and cilia microtubules. Promotes tubulin polyglutamylation which stimulates spastin/SPAST-mediated microtubule severing, thereby regulating microtubule functions. This chain is Tubulin polyglutamylase TTLL11, found in Mus musculus (Mouse).